The sequence spans 271 residues: Zinc finger protein 501 (271 aa).

9 consecutive C2H2-type zinc fingers follow at residues 22-44 (SKCSECGRFFTQRSSLTQHQRIH), 50-72 (YVCSECGSCFRKQSNLTQHLRIH), 78-100 (YKCNECEKAFQTKAILVQHLRIH), 106-128 (YKCNECGKAFCQSPSLIKHQRIH), 134-156 (YKCAECGKAFSQSVCLTRHQRSH), 162-184 (FKCNECGKAFNQSACLMQHQRIH), 190-212 (YTCTECGKAFTQNSSLVEHERTH), 218-240 (YKCSECEKTFRKQAHLSEHYRIH), and 246-268 (YECFGCGKSFRHSSALLRHQRLH).

It belongs to the krueppel C2H2-type zinc-finger protein family.

The protein resides in the nucleus. It localises to the nucleolus. Its function is as follows. May be involved in transcriptional regulation. Essential for Golgi structural integrity. This is Zinc finger protein 501 (ZNF501) from Pongo abelii (Sumatran orangutan).